The following is a 346-amino-acid chain: Alkylated DNA repair protein ALKBH8 homolog (346 aa).

Residues Met1 to Pro21 are disordered. Residues Ser12–Pro21 show a composition bias toward low complexity. Residues Ser24–Leu102 form the RRM domain. One can recognise a Fe2OG dioxygenase domain in the interval Asn208–Arg328. His226, Asp228, and His298 together coordinate Fe cation. 2-oxoglutarate contacts are provided by Arg319 and Arg325.

It belongs to the alkB family. Fe(2+) serves as cofactor.

Functionally, binds tRNA and catalyzes the iron and alpha-ketoglutarate dependent hydroxylation of 5-methylcarboxymethyl uridine at the wobble position of the anticodon loop in tRNA via its dioxygenase domain, giving rise to 5-(S)-methoxycarbonylhydroxymethyluridine. This Arabidopsis thaliana (Mouse-ear cress) protein is Alkylated DNA repair protein ALKBH8 homolog.